The primary structure comprises 452 residues: Digeranylgeranylglycerophospholipid reductase (452 aa).

Residues 15-16 (FA), 35-36 (DS), and 45-50 (KPCGDA) contribute to the FAD site. A 2,3-bis-O-phytanyl-sn-glycerol 1-phospholipid is bound at residue His55. Ala122 and Asp288 together coordinate FAD. Position 297 (His297) interacts with a 2,3-bis-O-phytanyl-sn-glycerol 1-phospholipid. 300 to 301 (GK) lines the FAD pocket. A disulfide bridge connects residues Cys310 and Cys335. Tyr340 provides a ligand contact to a 2,3-bis-O-phytanyl-sn-glycerol 1-phospholipid.

It belongs to the geranylgeranyl reductase family. In terms of assembly, monomer. FAD is required as a cofactor.

It carries out the reaction a 2,3-bis-O-phytanyl-sn-glycerol 1-phospholipid + 8 A = a 2,3-bis-O-(geranylgeranyl)-sn-glycerol 1-phospholipid + 8 AH2. It catalyses the reaction 2,3-bis-O-(phytanyl)-sn-glycerol 1-phosphate + 8 A = 2,3-bis-O-(geranylgeranyl)-sn-glycerol 1-phosphate + 8 AH2. The catalysed reaction is sn-3-O-phytanylglycerol 1-phosphate + 4 A = sn-3-O-(geranylgeranyl)glycerol 1-phosphate + 4 AH2. The enzyme catalyses phytyl diphosphate + 3 A = (2E,6E,10E)-geranylgeranyl diphosphate + 3 AH2. Its pathway is membrane lipid metabolism; glycerophospholipid metabolism. Its function is as follows. Is involved in the reduction of 2,3-digeranylgeranylglycerophospholipids (unsaturated archaeols) into 2,3-diphytanylglycerophospholipids (saturated archaeols) in the biosynthesis of archaeal membrane lipids. Catalyzes the formation of archaetidic acid (2,3-di-O-phytanyl-sn-glyceryl phosphate) from 2,3-di-O-geranylgeranylglyceryl phosphate (DGGGP) via the hydrogenation of each double bond of the isoprenoid chains. Is not active with NADPH or NADH as an electron donor; the physiological reducing agent is unknown. Is also active on the more upstream precursors of membrane lipid biosynthesis, catalyzing the complete reduction of 3-O-geranylgeranylglyceryl phosphate (GGGP) to 3-O-phytanylglyceryl phosphate, and the partial reduction of geranylgeranyl diphosphate (GGPP) to phytyl diphosphate, thus reducing three of four GGPP double bonds and preserving the allylic double bond (at position 2). This reaction product is a reactive prenyl donor, which can be used as a substrate by archaeal prenyltransferases such as GGGP synthases. The chain is Digeranylgeranylglycerophospholipid reductase from Sulfolobus acidocaldarius (strain ATCC 33909 / DSM 639 / JCM 8929 / NBRC 15157 / NCIMB 11770).